A 426-amino-acid polypeptide reads, in one-letter code: UDP-N-acetylglucosamine 1-carboxyvinyltransferase (426 aa).

23 to 24 (KN) serves as a coordination point for phosphoenolpyruvate. UDP-N-acetyl-alpha-D-glucosamine is bound at residue Arg-99. The active-site Proton donor is the Asp-123. 2 residues coordinate UDP-N-acetyl-alpha-D-glucosamine: Asp-311 and Ile-333.

The protein belongs to the EPSP synthase family. MurA subfamily.

It is found in the cytoplasm. The enzyme catalyses phosphoenolpyruvate + UDP-N-acetyl-alpha-D-glucosamine = UDP-N-acetyl-3-O-(1-carboxyvinyl)-alpha-D-glucosamine + phosphate. It participates in cell wall biogenesis; peptidoglycan biosynthesis. Cell wall formation. Adds enolpyruvyl to UDP-N-acetylglucosamine. The chain is UDP-N-acetylglucosamine 1-carboxyvinyltransferase from Nocardia farcinica (strain IFM 10152).